The primary structure comprises 500 residues: MENSQVWLLWGALSVAVLFYLSTLRRRHAGGKPLPPGPTPLPLIGNLHLAGGTSFHHKLRDLARVHGPVMTLKLGLATNVVISSREAAIEAYTKYDRHLAARATPDTFRACGFADRSMVFIPSSDPRWKALRGIQGSHVFTPRGLAAVRPIRERKVGDLMAYLRAHAGEEVLLGQAMHTGLLNLVSFSYFSIDIVDMGSQMARDLREVVDDIISVVGKPNISDFYPFLRPLDLQGLRRWTTKRFNRVFSIMGDIIDRRLAHIRDNKPSHNDFLDSLLELMAAGKIDRVNVLDMLFEAFVAGADTMALTLEWVMAELLKNPGVMAKARAELRDVLGDKEVVEEADAARLPYLQAVLKEAMRLHPVGALLLPHFAVEDGVEVGGYAVPKGSTVLFNAWAIMRDPAAWERPDEFVPERFVERAPLLDFRGKDAEFMPFGSGRRLCPGLPLAERVMPFILASMLHTFEWKLPGGMTAEDVDVSEKFKSANVLAVPLKAVPVLIK.

The helical transmembrane segment at 4–24 (SQVWLLWGALSVAVLFYLSTL) threads the bilayer. Cys442 is a heme binding site.

It belongs to the cytochrome P450 family. Heme serves as cofactor.

The protein localises to the membrane. It carries out the reaction ent-cassa-12,15-diene + reduced [NADPH--hemoprotein reductase] + O2 = ent-11beta-hydroxycassa-12,15-diene + oxidized [NADPH--hemoprotein reductase] + H2O + H(+). Functionally, enzyme of the diterpenoid metabolism involved in the biosynthesis of antibacterial oryzalides such as phytocassane. Can use ent-cassadiene as substrate, but not C11-alpha-hydroxy-ent-cassadiene, ent-pimaradiene, ent-sandaracopimaradiene, ent-kaurene, ent-isokaurene, syn-pimaradiene, syn-stemarene, syn-stemodene. This chain is Ent-cassadiene C11-alpha-hydroxylase 1, found in Oryza sativa subsp. japonica (Rice).